The chain runs to 188 residues: Elongation factor P (188 aa).

It belongs to the elongation factor P family.

The protein resides in the cytoplasm. Its pathway is protein biosynthesis; polypeptide chain elongation. In terms of biological role, involved in peptide bond synthesis. Stimulates efficient translation and peptide-bond synthesis on native or reconstituted 70S ribosomes in vitro. Probably functions indirectly by altering the affinity of the ribosome for aminoacyl-tRNA, thus increasing their reactivity as acceptors for peptidyl transferase. This is Elongation factor P from Chlorobium phaeobacteroides (strain DSM 266 / SMG 266 / 2430).